We begin with the raw amino-acid sequence, 131 residues long: D-ribose pyranase (131 aa).

The active-site Proton donor is H20. Substrate contacts are provided by residues D28, H98, and 120–122; that span reads YAN.

This sequence belongs to the RbsD / FucU family. RbsD subfamily. As to quaternary structure, homodecamer.

The protein resides in the cytoplasm. It carries out the reaction beta-D-ribopyranose = beta-D-ribofuranose. It participates in carbohydrate metabolism; D-ribose degradation; D-ribose 5-phosphate from beta-D-ribopyranose: step 1/2. In terms of biological role, catalyzes the interconversion of beta-pyran and beta-furan forms of D-ribose. The polypeptide is D-ribose pyranase (Bacillus anthracis (strain A0248)).